Consider the following 230-residue polypeptide: Large ribosomal subunit protein uL1 (230 aa).

Belongs to the universal ribosomal protein uL1 family. As to quaternary structure, part of the 50S ribosomal subunit.

Its function is as follows. Binds directly to 23S rRNA. The L1 stalk is quite mobile in the ribosome, and is involved in E site tRNA release. In terms of biological role, protein L1 is also a translational repressor protein, it controls the translation of the L11 operon by binding to its mRNA. The chain is Large ribosomal subunit protein uL1 from Limosilactobacillus reuteri subsp. reuteri (strain JCM 1112) (Lactobacillus reuteri).